Consider the following 126-residue polypeptide: Glycine cleavage system H protein (126 aa).

The 83-residue stretch at 22 to 104 folds into the Lipoyl-binding domain; the sequence is IAYVGITDYA…YGEGWLIKMK (83 aa). K63 is subject to N6-lipoyllysine.

This sequence belongs to the GcvH family. In terms of assembly, the glycine cleavage system is composed of four proteins: P, T, L and H. The cofactor is (R)-lipoate.

Functionally, the glycine cleavage system catalyzes the degradation of glycine. The H protein shuttles the methylamine group of glycine from the P protein to the T protein. This chain is Glycine cleavage system H protein, found in Bacteroides thetaiotaomicron (strain ATCC 29148 / DSM 2079 / JCM 5827 / CCUG 10774 / NCTC 10582 / VPI-5482 / E50).